A 278-amino-acid polypeptide reads, in one-letter code: DNA repair protein RecO (278 aa).

Residues 1–12 are compositionally biased toward polar residues; that stretch reads MGTNDALTSTED. Residues 1–41 form a disordered region; the sequence is MGTNDALTSTEDAVTAGANDAPLPAPPEPPRKARRATSRTS.

The protein belongs to the RecO family.

Functionally, involved in DNA repair and RecF pathway recombination. This chain is DNA repair protein RecO, found in Burkholderia orbicola (strain AU 1054).